A 612-amino-acid polypeptide reads, in one-letter code: Elongation factor 4 (612 aa).

The tr-type G domain maps to 11–193 (KHIRNFAIVA…KVVKDIPAPS (183 aa)). Residues 23–28 (DHGKST) and 140–143 (NKID) each bind GTP.

The protein belongs to the TRAFAC class translation factor GTPase superfamily. Classic translation factor GTPase family. LepA subfamily.

The protein localises to the cell membrane. The enzyme catalyses GTP + H2O = GDP + phosphate + H(+). In terms of biological role, required for accurate and efficient protein synthesis under certain stress conditions. May act as a fidelity factor of the translation reaction, by catalyzing a one-codon backward translocation of tRNAs on improperly translocated ribosomes. Back-translocation proceeds from a post-translocation (POST) complex to a pre-translocation (PRE) complex, thus giving elongation factor G a second chance to translocate the tRNAs correctly. Binds to ribosomes in a GTP-dependent manner. This Lactobacillus helveticus (strain DPC 4571) protein is Elongation factor 4.